Here is a 496-residue protein sequence, read N- to C-terminus: Sugar transporter ERD6 (496 aa).

6 helical membrane passes run 58–78 (VFLSTFVAVSGSFCTGCGVGF), 94–114 (VAEYSMFGSILTLGGLIGAVF), 128–148 (MLFCEFFCITGWLCVALAQNA), 156–176 (LLLGIGVGIFSYVIPVYIAEI), 183–203 (GSFVFANQLMQNCGISLFFII), and 211–231 (LLTVVGLVPCVFHVFCLFFIP). Ser256 is subject to Phosphoserine. Transmembrane regions (helical) follow at residues 292–312 (YPLIIGVGLMFLQQLCGSSGV), 329–349 (IGTSVIATIMVPKAMLATVLV), 364–384 (AMGLSALLLSVSYGFQSFGIL), 394–414 (IGVLGHIVSFAMGMGGLPWII), 430–450 (LVTVTNWLFGWIITYTFNFML), and 456–476 (GMFLIFSMVSASSIVFIYFLV).

This sequence belongs to the major facilitator superfamily. Sugar transporter (TC 2.A.1.1) family. As to expression, expressed in both shoots and roots. In roots, expressed in epidermal cells and especially strongly in cortex cells. In flowers, expressed in sepals.

The protein localises to the membrane. Its function is as follows. Sugar transporter. The polypeptide is Sugar transporter ERD6 (ERD6) (Arabidopsis thaliana (Mouse-ear cress)).